The primary structure comprises 441 residues: Xylose isomerase 1 (441 aa).

Catalysis depends on residues histidine 105 and aspartate 108. Residues glutamate 236, glutamate 272, histidine 275, aspartate 300, aspartate 311, aspartate 313, and aspartate 343 each coordinate Mg(2+).

The protein belongs to the xylose isomerase family. As to quaternary structure, homotetramer. The cofactor is Mg(2+).

Its subcellular location is the cytoplasm. It carries out the reaction alpha-D-xylose = alpha-D-xylulofuranose. The protein is Xylose isomerase 1 (xylA1) of Xanthomonas axonopodis pv. citri (strain 306).